Reading from the N-terminus, the 399-residue chain is MNIHEHQAKAVLAEFGAPVPRGFAAFTPDEAAAAAEKLGGPVFVVKSQIHAGGRGKGKFEGLGPDAKGGVRVVKSVEEVRSNAEEMLGRVLVTHQTGPKGKQVNRLYIEEGAAIAKEFYLSLLVDRASSKVSVVASTEGGMDIEDVAHSTPEKIHTFTIDPATGVWPTHHRALAKALGLTGGLAKEAASLLNQLYTAFMAKDMAMLEINPLIVTADDHLRVLDAKLSFDGNSLFRHPDIKALRDESEEDPKEIEASKYDLAYIALDGEIGCMVNGAGLAMATMDIIKLYGAEPANFLDVGGGASKEKVTAAFKIITADPAVKGILVNIFGGIMRCDIIAEGVIAAVKEVGLQVPLVVRLEGTNVELGKKIISESGLNVIAANDLSDGAEKIVAAVKGAR.

Positions 9-254 constitute an ATP-grasp domain; the sequence is KAVLAEFGAP…ESEEDPKEIE (246 aa). Residues K46, 53-55, E109, A112, and E117 contribute to the ATP site; that span reads GRG. Mg(2+) is bound by residues N209 and D223. Residues N274 and 331-333 each bind substrate; that span reads GIM.

It belongs to the succinate/malate CoA ligase beta subunit family. Heterotetramer of two alpha and two beta subunits. It depends on Mg(2+) as a cofactor.

The enzyme catalyses succinate + ATP + CoA = succinyl-CoA + ADP + phosphate. The catalysed reaction is GTP + succinate + CoA = succinyl-CoA + GDP + phosphate. The protein operates within carbohydrate metabolism; tricarboxylic acid cycle; succinate from succinyl-CoA (ligase route): step 1/1. Functionally, succinyl-CoA synthetase functions in the citric acid cycle (TCA), coupling the hydrolysis of succinyl-CoA to the synthesis of either ATP or GTP and thus represents the only step of substrate-level phosphorylation in the TCA. The beta subunit provides nucleotide specificity of the enzyme and binds the substrate succinate, while the binding sites for coenzyme A and phosphate are found in the alpha subunit. The chain is Succinate--CoA ligase [ADP-forming] subunit beta from Caulobacter vibrioides (strain NA1000 / CB15N) (Caulobacter crescentus).